The primary structure comprises 447 residues: Na(+)-translocating NADH-quinone reductase subunit A (447 aa).

It belongs to the NqrA family. Composed of six subunits; NqrA, NqrB, NqrC, NqrD, NqrE and NqrF.

The catalysed reaction is a ubiquinone + n Na(+)(in) + NADH + H(+) = a ubiquinol + n Na(+)(out) + NAD(+). Its function is as follows. NQR complex catalyzes the reduction of ubiquinone-1 to ubiquinol by two successive reactions, coupled with the transport of Na(+) ions from the cytoplasm to the periplasm. NqrA to NqrE are probably involved in the second step, the conversion of ubisemiquinone to ubiquinol. The sequence is that of Na(+)-translocating NADH-quinone reductase subunit A from Photorhabdus laumondii subsp. laumondii (strain DSM 15139 / CIP 105565 / TT01) (Photorhabdus luminescens subsp. laumondii).